Consider the following 322-residue polypeptide: Mas-related G-protein coupled receptor member X4 (322 aa).

Residues 1–31 lie on the Extracellular side of the membrane; sequence MDPTVPVFGTKLTPINGREETPCYNQTLSFT. An N-linked (GlcNAc...) asparagine glycan is attached at N25. The chain crosses the membrane as a helical span at residues 32-52; sequence VLTCIISLVGLTGNAVVLWLL. At 53–60 the chain is on the cytoplasmic side; that stretch reads GYRMRRNA. Residues 61-81 form a helical membrane-spanning segment; it reads VSIYILNLAAADFLFLSFQII. Residues 82–96 are Extracellular-facing; sequence RLPLRLINISHLIRK. The N-linked (GlcNAc...) asparagine glycan is linked to N89. A helical transmembrane segment spans residues 97 to 117; the sequence is ILVSVMTFPYFTGLSMLSAIS. Topologically, residues 118-137 are cytoplasmic; it reads TERCLSVLWPIWYRCRRPTH. A helical transmembrane segment spans residues 138 to 158; that stretch reads LSAVVCVLLWGLSLLFSMLEW. Residues 159–177 lie on the Extracellular side of the membrane; sequence RFCDFLFSGADSSWCETSD. The chain crosses the membrane as a helical span at residues 178-198; the sequence is FIPVAWLIFLCVVLCVSSLVL. Residues 199–218 lie on the Cytoplasmic side of the membrane; that stretch reads LVRILCGSRKMPLTRLYVTI. The helical transmembrane segment at 219 to 239 threads the bilayer; sequence LLTVLVFLLCGLPFGILGALI. Residues 240–254 are Extracellular-facing; sequence YRMHLNLEVLYCHVY. Residues 255 to 275 traverse the membrane as a helical segment; that stretch reads LVCMSLSSLNSSANPIIYFFV. At 276–322 the chain is on the cytoplasmic side; the sequence is GSFRQRQNRQNLKLVLQRALQDKPEVDKGEGQLPEESLELSGSRLGP. Positions 299-322 are disordered; it reads PEVDKGEGQLPEESLELSGSRLGP.

Belongs to the G-protein coupled receptor 1 family. Mas subfamily. As to expression, uniquely localized in a subset of small dorsal root and trigeminal sensory neurons.

The protein resides in the cell membrane. In terms of biological role, orphan receptor. Probably involved in the function of nociceptive neurons. May regulate nociceptor function and/or development, including the sensation or modulation of pain. Potently activated by enkephalins. This is Mas-related G-protein coupled receptor member X4 (MRGPRX4) from Homo sapiens (Human).